We begin with the raw amino-acid sequence, 465 residues long: Putative F-box/LRR-repeat protein At3g28410 (465 aa).

One can recognise an F-box domain in the interval 27 to 73 (ADFINYMPDDILHHILSFIPTDLAMRTSVLSRRWRHVWCETPCLDIK). LRR repeat units follow at residues 127 to 155 (VRDFTYTKTYRFPDIFYISSSLKQLDVTL), 178 to 203 (FCQIPDESMHNILSGCPILESLTLDT), 207 to 225 (LERLDLSKSPNLRRLDINR), 278 to 302 (ADRYQTMALEMLSKFHNVKRLTVGE), 332 to 357 (FVRSVIPGISRLLQNSPGLKKLTLHT), 402 to 427 (TSKLVASFMNLVLRNAKTLERMVVWL), and 447 to 465 (VETLSHNNNVSILLKQSNC).

The polypeptide is Putative F-box/LRR-repeat protein At3g28410 (Arabidopsis thaliana (Mouse-ear cress)).